The primary structure comprises 214 residues: Thiamine-phosphate synthase (214 aa).

4-amino-2-methyl-5-(diphosphooxymethyl)pyrimidine contacts are provided by residues 37 to 41 and Asn-69; that span reads QLRDK. Asp-70 and Asp-89 together coordinate Mg(2+). Ser-108 contributes to the 4-amino-2-methyl-5-(diphosphooxymethyl)pyrimidine binding site. A 2-[(2R,5Z)-2-carboxy-4-methylthiazol-5(2H)-ylidene]ethyl phosphate-binding site is contributed by 134-136; sequence TDS. Residue Lys-137 coordinates 4-amino-2-methyl-5-(diphosphooxymethyl)pyrimidine. 2-[(2R,5Z)-2-carboxy-4-methylthiazol-5(2H)-ylidene]ethyl phosphate contacts are provided by residues Gly-167 and 187 to 188; that span reads IS.

It belongs to the thiamine-phosphate synthase family. The cofactor is Mg(2+).

The enzyme catalyses 2-[(2R,5Z)-2-carboxy-4-methylthiazol-5(2H)-ylidene]ethyl phosphate + 4-amino-2-methyl-5-(diphosphooxymethyl)pyrimidine + 2 H(+) = thiamine phosphate + CO2 + diphosphate. The catalysed reaction is 2-(2-carboxy-4-methylthiazol-5-yl)ethyl phosphate + 4-amino-2-methyl-5-(diphosphooxymethyl)pyrimidine + 2 H(+) = thiamine phosphate + CO2 + diphosphate. It catalyses the reaction 4-methyl-5-(2-phosphooxyethyl)-thiazole + 4-amino-2-methyl-5-(diphosphooxymethyl)pyrimidine + H(+) = thiamine phosphate + diphosphate. It participates in cofactor biosynthesis; thiamine diphosphate biosynthesis; thiamine phosphate from 4-amino-2-methyl-5-diphosphomethylpyrimidine and 4-methyl-5-(2-phosphoethyl)-thiazole: step 1/1. In terms of biological role, condenses 4-methyl-5-(beta-hydroxyethyl)thiazole monophosphate (THZ-P) and 2-methyl-4-amino-5-hydroxymethyl pyrimidine pyrophosphate (HMP-PP) to form thiamine monophosphate (TMP). In Natronomonas pharaonis (strain ATCC 35678 / DSM 2160 / CIP 103997 / JCM 8858 / NBRC 14720 / NCIMB 2260 / Gabara) (Halobacterium pharaonis), this protein is Thiamine-phosphate synthase.